Reading from the N-terminus, the 72-residue chain is Translation initiation factor IF-1 (72 aa).

Residues Met1–Lys72 form the S1-like domain.

This sequence belongs to the IF-1 family. As to quaternary structure, component of the 30S ribosomal translation pre-initiation complex which assembles on the 30S ribosome in the order IF-2 and IF-3, IF-1 and N-formylmethionyl-tRNA(fMet); mRNA recruitment can occur at any time during PIC assembly.

It is found in the cytoplasm. Functionally, one of the essential components for the initiation of protein synthesis. Stabilizes the binding of IF-2 and IF-3 on the 30S subunit to which N-formylmethionyl-tRNA(fMet) subsequently binds. Helps modulate mRNA selection, yielding the 30S pre-initiation complex (PIC). Upon addition of the 50S ribosomal subunit IF-1, IF-2 and IF-3 are released leaving the mature 70S translation initiation complex. In Ruthia magnifica subsp. Calyptogena magnifica, this protein is Translation initiation factor IF-1.